The primary structure comprises 815 residues: MNIKYDVQKIEKQAQKYWKEKKSFEVIEDYSKEKYYCLSMFPYPSGRLHMGHVRNYSIGDVISRFQRMQGKNVMQPIGWDGFGLPAENAALKNKESPAKWTYKNINYMKTQLNQLGFGYDWAREITTCHPKYYRWEQWLFIKLFKKNLIYKKKAIVNWDPVDQTVLANEQVINGRGWRSNALIEKKEISQWFIRITNYAEELLNDLDKLYGWPDPVKIMQKNWIGKSIGLEITFSRRNSDPLIIYTTRPDTLMGVTYLAISFEHPLALESGKNNYQVQSFIEKCKTIQTSEILNEIMDKKGIDSGFKCIHPITNNEVPIWITNFVLMSYGTGAIMSVPAHDKRDFKFAKKYGIFIKQVINKNESIDKGPIINKGKLFNSEEFSGMDFNQAYESIAKTLIEKNLGNKKINYRLRDWGISRQRYWGCPIPIVNCKYCGSVTVKVKDLPVILPEKVKFYDVSSPIKKMPNFYQTICPKCGSKAHRETDTFDTFFESSWYFARHTCNNNNNAMLDKRVNYWLEVDQYIGGVEHSILHLLYARFFNKLLRDEGLIKYDEPFKNLLTQGMVLKNGVKMSKSKGNTVDPTKMIKKYGADTVRLFILFAAPPMQDLEWNNSGLEGAHRFIKKVYRLVSIYINDSKDYIVNHLNINFLNKTQKHIRRKIHQNLVKITDDINRRYTFNTAISTLMESVDIINKFTKTDTQSIALRSESINIILLTLSPITPHICHYLWLKLGNKKAIINEPWPKVDLKALIESEVQIIIQVDGKLRDKMMMMINTDKEILESEVLSNKNIIKFTKNKNIIKIIIIHNKLINIVTK.

Positions Pro-42–His-52 match the 'HIGH' region motif. Residues Lys-571–Ser-575 carry the 'KMSKS' region motif. Residue Lys-574 coordinates ATP.

It belongs to the class-I aminoacyl-tRNA synthetase family.

The protein localises to the cytoplasm. The catalysed reaction is tRNA(Leu) + L-leucine + ATP = L-leucyl-tRNA(Leu) + AMP + diphosphate. This Vesicomyosocius okutanii subsp. Calyptogena okutanii (strain HA) protein is Leucine--tRNA ligase.